The chain runs to 437 residues: mRNA cleavage and polyadenylation factor CLP1 (437 aa).

ATP-binding positions include Glu-23 and 122–127 (STGKSS).

Belongs to the Clp1 family. Clp1 subfamily. As to quaternary structure, component of a pre-mRNA cleavage factor complex. Interacts directly with PCF11.

It localises to the nucleus. Functionally, required for endonucleolytic cleavage during polyadenylation-dependent pre-mRNA 3'-end formation. The sequence is that of mRNA cleavage and polyadenylation factor CLP1 from Kluyveromyces lactis (strain ATCC 8585 / CBS 2359 / DSM 70799 / NBRC 1267 / NRRL Y-1140 / WM37) (Yeast).